Reading from the N-terminus, the 179-residue chain is Replication restart protein DnaT (179 aa).

The interval 156–179 (GGLPKRDVNTVSEPDSQIPPGFRG) is disordered.

The protein belongs to the DnaT family. As to quaternary structure, homooligomerizes. Interacts with PriB. Component of the replication restart primosome. Primosome assembly occurs via a 'hand-off' mechanism. PriA binds to replication forks, subsequently PriB then DnaT bind; DnaT then displaces ssDNA to generate the helicase loading substrate.

Its function is as follows. Involved in the restart of stalled replication forks, which reloads the replicative helicase on sites other than the origin of replication. Can function in multiple replication restart pathways. Displaces ssDNA from a PriB-ssDNA complex. Probably forms a spiral filament on ssDNA. The protein is Replication restart protein DnaT of Shigella boydii serotype 18 (strain CDC 3083-94 / BS512).